The primary structure comprises 264 residues: tRNA pseudouridine synthase A (264 aa).

The Nucleophile role is filled by Asp-51. Position 109 (Tyr-109) interacts with substrate.

It belongs to the tRNA pseudouridine synthase TruA family. Homodimer.

It catalyses the reaction uridine(38/39/40) in tRNA = pseudouridine(38/39/40) in tRNA. Formation of pseudouridine at positions 38, 39 and 40 in the anticodon stem and loop of transfer RNAs. The sequence is that of tRNA pseudouridine synthase A from Pseudoalteromonas translucida (strain TAC 125).